Reading from the N-terminus, the 154-residue chain is MAL-like protein (154 aa).

4 helical membrane-spanning segments follow: residues 24–44, 61–81, 99–119, and 131–151; these read LFLTIPFAFFLPELVFGFWVW, VLYVSLTSFLISLMFLMSYLF, GTTGILYMSASVLQAYATIIS, and VAASFFAFLTTLLYILHAFSI. Residues 24–154 enclose the MARVEL domain; the sequence is LFLTIPFAFF…ILHAFSIYYH (131 aa).

The protein belongs to the MAL family.

It is found in the membrane. The chain is MAL-like protein (Mall) from Mus musculus (Mouse).